The chain runs to 307 residues: MEKIAIIGAGRVGESTAQFLAKNDTCRELVLLDVREGAAEGAALDIQETAPLFGFDTRLKGGTDAAILSGAELVVITAGIPRKPGMSRSDVLDTNVAILDKLVDGIMEHAPDAMLLLVSNPVDVLTYRAWQRTGWPRNRVFGQAGVLDSSRMASFVALETGLSVNDINAMVLGGHGDSMVPMLRYSTINGIPVRHFLSEEAIARIVERTRHGGAEILALKQTSSAYDAPAAAIAAMVDAIALDRKRVLPTVALLEGEYGERDVAMGVPCILGRNGVESVIELPLEPSERKEFDQSLAGVRDDINRLK.

NAD(+)-binding positions include 8–13 (GAGRVG) and Asp33. Substrate is bound by residues Arg82 and Arg88. NAD(+) is bound by residues Asn95 and 118–120 (VSN). Substrate-binding residues include Asn120 and Arg151. Residue His175 is the Proton acceptor of the active site.

It belongs to the LDH/MDH superfamily. MDH type 3 family.

It carries out the reaction (S)-malate + NAD(+) = oxaloacetate + NADH + H(+). Its function is as follows. Catalyzes the reversible oxidation of malate to oxaloacetate. The sequence is that of Malate dehydrogenase from Thioalkalivibrio sulfidiphilus (strain HL-EbGR7).